We begin with the raw amino-acid sequence, 707 residues long: Elongation factor G (707 aa).

Residues 8–297 (ERVRNIGIAA…AVLDYLPSPL (290 aa)) form the tr-type G domain. Residues 17–24 (AHIDAGKT), 96–100 (DTPGH), and 150–153 (NKMD) contribute to the GTP site.

It belongs to the TRAFAC class translation factor GTPase superfamily. Classic translation factor GTPase family. EF-G/EF-2 subfamily.

The protein localises to the cytoplasm. Catalyzes the GTP-dependent ribosomal translocation step during translation elongation. During this step, the ribosome changes from the pre-translocational (PRE) to the post-translocational (POST) state as the newly formed A-site-bound peptidyl-tRNA and P-site-bound deacylated tRNA move to the P and E sites, respectively. Catalyzes the coordinated movement of the two tRNA molecules, the mRNA and conformational changes in the ribosome. The chain is Elongation factor G from Gloeobacter violaceus (strain ATCC 29082 / PCC 7421).